The primary structure comprises 264 residues: MKQYLDLMTRVLAEGTPKADRTGTGTLSIFGHQMRFNLQDGFPLVTTKRCHIRSIIHELLWFLNGDTNIKYLHENGVTIWDEWADENGDLGPVYGKQWRAWGTADGRQIDQLKTVLEQLKSDPDSRRIIVSAWNVGELDKMALAPCHAFFQFYVADGKLSCQLYQRSCDVFLGLPFNIASYALLVHMMAQQCDLEVGDFVWTGGDTHLYSNHMEQTKLQLSREPRSLPKLVIKRKPASLFDYKFDDFEIVDYDPHPGIKAPVAI.

Arg-21 is a binding site for dUMP. A (6R)-5,10-methylene-5,6,7,8-tetrahydrofolate-binding site is contributed by His-51. DUMP is bound at residue 126–127 (RR). The active-site Nucleophile is Cys-146. DUMP contacts are provided by residues 166 to 169 (RSCD), Asn-177, and 207 to 209 (HLY). Asp-169 is a (6R)-5,10-methylene-5,6,7,8-tetrahydrofolate binding site. Ala-263 contacts (6R)-5,10-methylene-5,6,7,8-tetrahydrofolate.

The protein belongs to the thymidylate synthase family. Bacterial-type ThyA subfamily. As to quaternary structure, homodimer.

The protein resides in the cytoplasm. The enzyme catalyses dUMP + (6R)-5,10-methylene-5,6,7,8-tetrahydrofolate = 7,8-dihydrofolate + dTMP. Its pathway is pyrimidine metabolism; dTTP biosynthesis. Functionally, catalyzes the reductive methylation of 2'-deoxyuridine-5'-monophosphate (dUMP) to 2'-deoxythymidine-5'-monophosphate (dTMP) while utilizing 5,10-methylenetetrahydrofolate (mTHF) as the methyl donor and reductant in the reaction, yielding dihydrofolate (DHF) as a by-product. This enzymatic reaction provides an intracellular de novo source of dTMP, an essential precursor for DNA biosynthesis. This Photorhabdus laumondii subsp. laumondii (strain DSM 15139 / CIP 105565 / TT01) (Photorhabdus luminescens subsp. laumondii) protein is Thymidylate synthase.